Reading from the N-terminus, the 328-residue chain is UPF0194 membrane protein YE2891 (328 aa).

Residues 1 to 22 (MNRKKIIVAVVIVALLAAIGYG) form the signal peptide. Coiled-coil stretches lie at residues 80-109 (YVNA…REEE) and 139-208 (ANKA…TTLL).

This sequence belongs to the UPF0194 family.

It is found in the periplasm. This is UPF0194 membrane protein YE2891 from Yersinia enterocolitica serotype O:8 / biotype 1B (strain NCTC 13174 / 8081).